Reading from the N-terminus, the 93-residue chain is Integration host factor subunit beta (93 aa).

It belongs to the bacterial histone-like protein family. In terms of assembly, heterodimer of an alpha and a beta chain.

Its function is as follows. This protein is one of the two subunits of integration host factor, a specific DNA-binding protein that functions in genetic recombination as well as in transcriptional and translational control. This is Integration host factor subunit beta from Vibrio vulnificus (strain YJ016).